The primary structure comprises 357 residues: MGSLESEKTVTGYAARDSSGHLSPYTYNLRKKGPEDVIVKVIYCGICHSDLVQMRNEMGMSHYPMVPGHEVVGIVTEIGSEVKKFKVGEHVGVGCIVGSCRSCGNCNQSMEQYCSKRIWTYNDVNHDGTPTQGGFASSMVVDQMFVVRIPENLPLEQAAPLLCAGVTVFSPMKHFAMTEPGKKCGILGLGGVGHLGVKIAKAFGLHVTVISSSDKKKEEAMEVLGADAYLVSKDTEKMMEAAESLDYIMDTIPVAHPLEPYLALLKTNGKLVMLGVVPEPLHFVTPPLILGRRSIAGSFIGGMEETQETLDFCAEKKVSSMIEVVGLDYINTAMERLEKNDVRYRFVVDVAGSELDN.

Cys47 is a binding site for Zn(2+). Ser49 is a binding site for NADP(+). Zn(2+) contacts are provided by His69, Glu70, Cys100, Cys103, Cys106, Cys114, and Cys163. NADP(+) is bound by residues Thr167, 188 to 193 (GLGGVG), 211 to 216 (SSSDKK), Thr251, Gly275, and 298 to 300 (SFI).

Belongs to the zinc-containing alcohol dehydrogenase family. Homodimer. Zn(2+) serves as cofactor.

The catalysed reaction is (E)-cinnamyl alcohol + NADP(+) = (E)-cinnamaldehyde + NADPH + H(+). It carries out the reaction (E)-coniferol + NADP(+) = (E)-coniferaldehyde + NADPH + H(+). The enzyme catalyses (E)-sinapyl alcohol + NADP(+) = (E)-sinapaldehyde + NADPH + H(+). It catalyses the reaction (E)-4-coumaroyl alcohol + NADP(+) = (E)-4-coumaraldehyde + NADPH + H(+). The catalysed reaction is (E)-caffeyl alcohol + NADP(+) = (E)-caffeyl aldehyde + NADPH + H(+). It participates in aromatic compound metabolism; phenylpropanoid biosynthesis. Its function is as follows. Involved in lignin biosynthesis. Catalyzes the final step specific for the production of lignin monomers. Catalyzes the NADPH-dependent reduction of coniferaldehyde, 5-hydroxyconiferaldehyde, sinapaldehyde, 4-coumaraldehyde and caffeyl aldehyde to their respective alcohols. The chain is Probable cinnamyl alcohol dehydrogenase from Pinus taeda (Loblolly pine).